The primary structure comprises 309 residues: tRNA dimethylallyltransferase (309 aa).

10–17 contacts ATP; the sequence is GPTAVGKT. Position 12 to 17 (12 to 17) interacts with substrate; sequence TAVGKT. The interaction with substrate tRNA stretch occupies residues 35-38; the sequence is DSMQ.

It belongs to the IPP transferase family. As to quaternary structure, monomer. Requires Mg(2+) as cofactor.

The enzyme catalyses adenosine(37) in tRNA + dimethylallyl diphosphate = N(6)-dimethylallyladenosine(37) in tRNA + diphosphate. Functionally, catalyzes the transfer of a dimethylallyl group onto the adenine at position 37 in tRNAs that read codons beginning with uridine, leading to the formation of N6-(dimethylallyl)adenosine (i(6)A). This chain is tRNA dimethylallyltransferase, found in Clostridium beijerinckii (strain ATCC 51743 / NCIMB 8052) (Clostridium acetobutylicum).